Reading from the N-terminus, the 1737-residue chain is Complement C4 (1737 aa).

The N-terminal stretch at 1–19 is a signal peptide; that stretch reads MRLLWGLAWAFSFFASSLQ. Residues cysteine 66 and cysteine 95 are joined by a disulfide bond. 2 N-linked (GlcNAc...) asparagine glycosylation sites follow: asparagine 224 and asparagine 664. Residues cysteine 633 and cysteine 667 are joined by a disulfide bond. A propeptide spanning residues 674–677 is cleaved from the precursor; sequence RQKR. Cystine bridges form between cysteine 700–cysteine 726, cysteine 701–cysteine 733, and cysteine 714–cysteine 734. Residues 700–734 enclose the Anaphylatoxin-like domain; that stretch reads CCQDGMTKLPMARTCEQRAARVPQPACREPFLSCC. Asparagine 743 carries an N-linked (GlcNAc...) asparagine glycan. A cross-link (isoglutamyl cysteine thioester (Cys-Gln)) is located at residues 1005-1008; the sequence is CAEQ. N-linked (GlcNAc...) asparagine glycosylation is found at asparagine 1323 and asparagine 1386. Residues tyrosine 1412, tyrosine 1414, and tyrosine 1416 each carry the sulfotyrosine modification. Residues 1443–1446 constitute a propeptide that is removed on maturation; it reads RRRR. 5 disulfides stabilise this stretch: cysteine 1464–cysteine 1528, cysteine 1576–cysteine 1581, cysteine 1588–cysteine 1666, cysteine 1611–cysteine 1735, and cysteine 1711–cysteine 1720. Positions 1588–1735 constitute an NTR domain; that stretch reads CPRQRRSLER…FLQEYSSQGC (148 aa). At tyrosine 1676 the chain carries Sulfotyrosine.

In absence of complement activation, circulates in blood as a disulfide-linked trimer of an alpha, beta and gamma chain. As to quaternary structure, complement C4b is composed of complement C4b-A, complement C4 beta and complement C4 gamma chains that are associated via disulfide bonds. Non-enzymatic component of the C3 convertase, also named C4bC2b, composed of the serine protease complement C2b (C2), as well as complement C4b. Non-enzymatic component of the C5 convertase, also named C4bC2bC3b, composed of the serine protease complement C2b (C2), complement C3b, as well as complement C4b. Prior to secretion, the single-chain precursor is enzymatically cleaved by plasminogen (PLG) to yield non-identical chains alpha, beta and gamma. During activation of the complement systems, the alpha chain is cleaved into C4a and C4b by different proteases depending on the complement pathway: C4b stays linked to the beta and gamma chains, while C4a is released in the plasma. The alpha chain is cleaved by C1S to generate C4a and C4b following activation by the classical complement system. The alpha chain is cleaved to generate C4a and C4b by MASP2 following activation by the lectin complement system. The alpha chain is cleaved by GZMK to generate C4a and C4b following activation by the GZMK complement system. Further degradation of C4b by C1 into the inactive fragments C4c and C4d blocks the generation of C3 convertase. The proteolytic cleavages often are incomplete so that many structural forms can be found in plasma. Post-translationally, upon activation, the internal thioester bond reacts with carbohydrate antigens on the target surface to form amide or ester bonds, leading to covalent association with the surface of pathogens. In terms of processing, complement C4b interacts with complement C3b via a thioester linkage. N- and O-glycosylated. O-glycosylated with a core 1 or possibly core 8 glycan.

The protein localises to the secreted. It localises to the cell surface. Functionally, precursor of non-enzymatic components of the classical, lectin and GZMK complement pathways, which consist in a cascade of proteins that leads to phagocytosis and breakdown of pathogens and signaling that strengthens the adaptive immune system. Non-enzymatic component of C3 and C5 convertases. Generated following cleavage by complement proteases (C1S, MASP2 or GZMK, depending on the complement pathway), it covalently attaches to the surface of pathogens, where it acts as an opsonin that marks the surface of antigens for removal. It then recruits the serine protease complement C2b to form the C3 and C5 convertases, which cleave and activate C3 and C5, respectively, the next components of the complement pathways. Complement C4b-A isotype is responsible for effective binding to form amide bonds with immune aggregates or protein antigens, while complement C4b-B isotype catalyzes the transacylation of the thioester carbonyl group to form ester bonds with carbohydrate antigens. Its function is as follows. Putative humoral mediator released following cleavage by complement proteases (C1S, MASP2 or GZMK, depending on the complement pathway). While it is strongly similar to anaphylatoxins, its role is unclear. Was reported to act as a mediator of local inflammatory process; however these effects were probably due to contamination with C3a and/C5a anaphylatoxins in biological assays. This is Complement C4 from Rattus norvegicus (Rat).